The primary structure comprises 249 residues: Globin-like protein 9 (249 aa).

A disordered region spans residues 20–43 (TNKGPNGLARRGTQRGCSRSKSTR). The Globin domain maps to 52–205 (SLTFSQKQAL…LIDELRGGFE (154 aa)). Heme-binding residues include His-116 and His-148.

Belongs to the globin family.

The sequence is that of Globin-like protein 9 (glb-9) from Caenorhabditis elegans.